The primary structure comprises 351 residues: MAPVLPVVLPLQPRIRLAQGIWLLSWLLALVGGLTLLCSGHLLVQLGHLGTFLAPSCSFPALPQTALAAGTVALGTGLGGAGASRASLDAAQYPPWRGVLTPLLAVGTAAGGGLLTLALGLALALPVSLNQGLEEGLEAALAHYKDTEVPGRCQAKRLMDELQLRYHCCGRHGYKDWFGVQWVSNRYLDPSDQDVVDRIQSNVEGLYLIDGVPFSCCNPHSPRPCLQSQLSDPYAHPLFDPRQPNLNLWAQGCHEVLLEHLQGLSGTLGSILAVTLLLQILVLLGLRYLQTALEGLGGVIDGEGEAQGYLFPGGLKDILKTAWLQGGLAHKPAPEEAPPDEEPPKEVLAEA.

The Cytoplasmic segment spans residues 1–19; that stretch reads MAPVLPVVLPLQPRIRLAQ. The helical transmembrane segment at 20–44 threads the bilayer; it reads GIWLLSWLLALVGGLTLLCSGHLLV. The Lumenal portion of the chain corresponds to 45–64; it reads QLGHLGTFLAPSCSFPALPQ. The chain crosses the membrane as a helical span at residues 65 to 84; sequence TALAAGTVALGTGLGGAGAS. The Cytoplasmic segment spans residues 85 to 102; it reads RASLDAAQYPPWRGVLTP. Residues 103–125 traverse the membrane as a helical segment; it reads LLAVGTAAGGGLLTLALGLALAL. Residues 126 to 263 lie on the Lumenal side of the membrane; sequence PVSLNQGLEE…HEVLLEHLQG (138 aa). Residues 264–286 traverse the membrane as a helical segment; the sequence is LSGTLGSILAVTLLLQILVLLGL. The Cytoplasmic segment spans residues 287–351; that stretch reads RYLQTALEGL…EPPKEVLAEA (65 aa). Residues 329-351 are disordered; it reads AHKPAPEEAPPDEEPPKEVLAEA. Positions 342-351 are enriched in basic and acidic residues; that stretch reads EPPKEVLAEA.

This sequence belongs to the PRPH2/ROM1 family. In terms of assembly, homodimer; disulfide-linked. Forms a homotetramer. Forms a heterotetramer with PRPH2. Homotetramer and heterotetramer core complexes go on to form higher order complexes by formation of intermolecular disulfide bonds. Interacts with STX3 isoform 3B. Interacts with SNAP25. As to expression, expressed in the retina (at protein level).

It is found in the photoreceptor inner segment membrane. The protein localises to the photoreceptor outer segment membrane. Plays a role in rod outer segment (ROS) morphogenesis. May play a role with PRPH2 in the maintenance of the structure of ROS curved disks. Plays a role in the organization of the ROS and maintenance of ROS disk diameter. Involved in the maintenance of the retina outer nuclear layer. The polypeptide is Rod outer segment membrane protein 1 (Rom1) (Mus musculus (Mouse)).